Consider the following 286-residue polypeptide: Aquaporin NIP1-3 (286 aa).

Residues 1-44 (MAGGEHGVNGQHEETRAMEEGSRDHQARCENSEQDGGSKSSSNN) are disordered. The span at 11–31 (QHEETRAMEEGSRDHQARCEN) shows a compositional bias: basic and acidic residues. Residues 34–44 (QDGGSKSSSNN) are compositionally biased toward polar residues. A run of 2 helical transmembrane segments spans residues 56-76 (VIAE…AVAV) and 84-104 (VTFP…VYSV). An NPA 1 motif is present at residues 113-115 (NPA). Helical transmembrane passes span 131-153 (VPAY…RALF), 172-192 (SLAM…GVAT), and 200-220 (LAGL…GPIS). The NPA 2 motif lies at 225 to 227 (NPA). Residues 239–259 (YTGIWVYIAGPVFGAVAGAWA) traverse the membrane as a helical segment.

This sequence belongs to the MIP/aquaporin (TC 1.A.8) family. NIP (TC 1.A.8.12) subfamily.

The protein localises to the membrane. Functionally, aquaporins facilitate the transport of water and small neutral solutes across cell membranes. This chain is Aquaporin NIP1-3 (NIP1-3), found in Oryza sativa subsp. japonica (Rice).